Reading from the N-terminus, the 209-residue chain is MNIDNASNWDPQALGLVPMVVEQSGRGERAYDIYSRLLKERVIFLVGPVNDVTANLVVAQLLFLEAENPDKDIYFYINSPGGSVTAGMSIYDTMQFIKPDVSTLCIGQAASMGAFLLNAGAKGKRFALPNSRVMIHQPLGGFQGQASDIAIHAKEILSIRDRLNRIMAEHSGQPLERIEKDTDRDNFLSAAEAAEYGLIDKVLTRRDAA.

Serine 111 serves as the catalytic Nucleophile. Histidine 136 is a catalytic residue.

It belongs to the peptidase S14 family. In terms of assembly, fourteen ClpP subunits assemble into 2 heptameric rings which stack back to back to give a disk-like structure with a central cavity, resembling the structure of eukaryotic proteasomes.

It localises to the cytoplasm. The enzyme catalyses Hydrolysis of proteins to small peptides in the presence of ATP and magnesium. alpha-casein is the usual test substrate. In the absence of ATP, only oligopeptides shorter than five residues are hydrolyzed (such as succinyl-Leu-Tyr-|-NHMec, and Leu-Tyr-Leu-|-Tyr-Trp, in which cleavage of the -Tyr-|-Leu- and -Tyr-|-Trp bonds also occurs).. Cleaves peptides in various proteins in a process that requires ATP hydrolysis. Has a chymotrypsin-like activity. Plays a major role in the degradation of misfolded proteins. The chain is ATP-dependent Clp protease proteolytic subunit from Dechloromonas aromatica (strain RCB).